A 121-amino-acid chain; its full sequence is Large ribosomal subunit protein eL18 (121 aa).

Belongs to the eukaryotic ribosomal protein eL18 family.

This Methanoregula boonei (strain DSM 21154 / JCM 14090 / 6A8) protein is Large ribosomal subunit protein eL18.